The primary structure comprises 256 residues: NH(3)-dependent NAD(+) synthetase (256 aa).

Residue 29-36 participates in ATP binding; the sequence is GISGGIDS. Aspartate 35 provides a ligand contact to Mg(2+). Arginine 115 provides a ligand contact to deamido-NAD(+). An ATP-binding site is contributed by threonine 135. Glutamate 140 is a binding site for Mg(2+). Deamido-NAD(+) contacts are provided by lysine 148 and aspartate 155. Lysine 164 and serine 186 together coordinate ATP. 245 to 246 is a binding site for deamido-NAD(+); sequence HK.

It belongs to the NAD synthetase family. As to quaternary structure, homodimer.

It carries out the reaction deamido-NAD(+) + NH4(+) + ATP = AMP + diphosphate + NAD(+) + H(+). It functions in the pathway cofactor biosynthesis; NAD(+) biosynthesis; NAD(+) from deamido-NAD(+) (ammonia route): step 1/1. Catalyzes the ATP-dependent amidation of deamido-NAD to form NAD. Uses ammonia as a nitrogen source. This Methanosarcina mazei (strain ATCC BAA-159 / DSM 3647 / Goe1 / Go1 / JCM 11833 / OCM 88) (Methanosarcina frisia) protein is NH(3)-dependent NAD(+) synthetase.